The chain runs to 657 residues: MPRYTVHVRGEWLAVPCQDGKLTVGWLGREAVRRYMKNKPDNGGFTSVDEVQFLVHRCKGLGLLDNEDELEVALEDNEFVEVVIEGDVMSPDFIPSQPEGVFLYSKYREPEKYIALDGDSLSTEDLVNLGKGRYKIKLTSIAEKKVQQSREVIDSIIKERTVVYGITTGFGKFARTVIPANKLQELQVNLVRSHSSGVGKPLSPERCRMLLALRINVLAKGYSGISLETLKQVIEAFNASCLSYVPEKGTVGASGDLAPLSHLALGLIGEGKMWSPKSGWADAKYVLEAHGLKPIVLKPKEGLALINGTQMITSLGCEALERASAIARQADIVAALTLEVLKGTTKAFDTDIHAVRPHRGQIEVAFRFRSLLDSDHHPSEIAESHRFCDRVQDAYTLRCCPQVHGVVNDTIAFVKDIITTELNSATDNPMVFASRGETISGGNFHGEYPAKALDYLAIGVHELAAISERRIERLCNPSLSELPAFLVAEGGLNSGFMIAHCTAAALVSESKALCHPSSVDSLSTSAATEDHVSMGGWAARKALRVVEHVEQVLAIELLAACQGIEFLRPLKTTTPLEKVYDLVRSVVRPWIKDRFMAPDIEAAHRLLLDQKVWEVAAPYIEKYRMEHIPESRPLSPTAFSLESLRKNSATIPESDDL.

A cross-link (5-imidazolinone (Ala-Gly)) is located at residues 253–255 (ASG). Ser-254 bears the 2,3-didehydroalanine (Ser) mark. Thr-396 is subject to Phosphothreonine. Ser-635 bears the Phosphoserine mark. A Phosphothreonine modification is found at Thr-637. Residue Ser-648 is modified to Phosphoserine.

The protein belongs to the PAL/histidase family. Post-translationally, contains an active site 4-methylidene-imidazol-5-one (MIO), which is formed autocatalytically by cyclization and dehydration of residues Ala-Ser-Gly.

It carries out the reaction L-histidine = trans-urocanate + NH4(+). It participates in amino-acid degradation; L-histidine degradation into L-glutamate; N-formimidoyl-L-glutamate from L-histidine: step 1/3. The protein is Histidine ammonia-lyase (Hal) of Mus musculus (Mouse).